A 105-amino-acid chain; its full sequence is MIYSTTETIPGKEITEIVGVVTGNVVQAKHIGRDIMAGLKSIVGGEIRGYTEMLTEARDLAIQRLVASANEKGADAVVGIRFTTSAIMDGSSEIMAFGTAVKLKK.

This sequence belongs to the UPF0145 family.

In Psychromonas ingrahamii (strain DSM 17664 / CCUG 51855 / 37), this protein is UPF0145 protein Ping_0381.